Here is a 335-residue protein sequence, read N- to C-terminus: Probable cytosolic iron-sulfur protein assembly protein Ciao1 (335 aa).

WD repeat units follow at residues 12–51 (GHKG…WSTK), 57–96 (GHKR…FECN), 101–140 (GHEN…EFEC), 146–185 (SHTQ…NDWD), 192–231 (SHTS…NSAG), 250–289 (QHSR…KPDE), and 301–335 (AHDQ…KVTE).

This sequence belongs to the WD repeat CIA1 family.

Its function is as follows. Essential component of the cytosolic iron-sulfur (Fe/S) protein assembly machinery. Required for the maturation of extramitochondrial Fe/S proteins. This is Probable cytosolic iron-sulfur protein assembly protein Ciao1 from Drosophila erecta (Fruit fly).